A 329-amino-acid chain; its full sequence is MNQTETSTAPANAETYDTNIYYTPSPRVTANDITTLTTFATPVPQALDYVNTQYNDIYRNQPATYYLPTYGQPGSSSFYPDFSNFNVARTQDFAALPTVAADIKPIIIKQEKEVSSGGSNNNDPTSTDLLGDGVAHSGDETAPIATLVAGANAPRRTKLDRRKAATMRERRRLRKVNEAFEVVKQRTCPNPNQRLPKVEILRSAIDYINTLERMLTSVGKTTKIMDQNHHLQMTQPISAAPHDYITSSHFANAGYNPDGPNVYDDEDLSDTDEDRDHHHHKLGNAIDLRRRNSLDGLARIVDNIPLLQSQPEVPNEIPAGSEDKKLEIL.

One can recognise a bHLH domain in the interval 160–211 (DRRKAATMRERRRLRKVNEAFEVVKQRTCPNPNQRLPKVEILRSAIDYINTL). The disordered stretch occupies residues 256 to 279 (NPDGPNVYDDEDLSDTDEDRDHHH). A compositionally biased stretch (acidic residues) spans 263 to 273 (YDDEDLSDTDE).

In terms of assembly, efficient DNA binding requires dimerization with another bHLH protein. As to expression, body wall muscle cells; in clonal muscle precursors, in a set of early embryonic blastomeres (the ms-granddaughters), and in six glial-like cells called GLRS.

The protein localises to the nucleus. In terms of biological role, accumulation defines the body wall muscle cell fate during embryogenesis. The protein is Myoblast determination protein 1 homolog (hlh-1) of Caenorhabditis briggsae.